The chain runs to 156 residues: ATP synthase subunit b (156 aa).

Residues 11 to 31 (AIAFFIFVVFCMKYVWPPLMA) form a helical membrane-spanning segment.

The protein belongs to the ATPase B chain family. In terms of assembly, F-type ATPases have 2 components, F(1) - the catalytic core - and F(0) - the membrane proton channel. F(1) has five subunits: alpha(3), beta(3), gamma(1), delta(1), epsilon(1). F(0) has three main subunits: a(1), b(2) and c(10-14). The alpha and beta chains form an alternating ring which encloses part of the gamma chain. F(1) is attached to F(0) by a central stalk formed by the gamma and epsilon chains, while a peripheral stalk is formed by the delta and b chains.

The protein localises to the cell inner membrane. Its function is as follows. F(1)F(0) ATP synthase produces ATP from ADP in the presence of a proton or sodium gradient. F-type ATPases consist of two structural domains, F(1) containing the extramembraneous catalytic core and F(0) containing the membrane proton channel, linked together by a central stalk and a peripheral stalk. During catalysis, ATP synthesis in the catalytic domain of F(1) is coupled via a rotary mechanism of the central stalk subunits to proton translocation. In terms of biological role, component of the F(0) channel, it forms part of the peripheral stalk, linking F(1) to F(0). In Aeromonas hydrophila subsp. hydrophila (strain ATCC 7966 / DSM 30187 / BCRC 13018 / CCUG 14551 / JCM 1027 / KCTC 2358 / NCIMB 9240 / NCTC 8049), this protein is ATP synthase subunit b.